Reading from the N-terminus, the 210-residue chain is WASH complex subunit 3 (210 aa).

Residues 49–73 (EEKLASISLRIQQIETTLSILEAKL) are a coiled coil. A disordered region spans residues 173–210 (LDPNLLDTPDAPVPDAVKKNTLDQDDDSDDGSESSFSD). Residues 195 to 204 (DQDDDSDDGS) are compositionally biased toward acidic residues.

This sequence belongs to the CCDC53 family. Component of the WASH complex.

This chain is WASH complex subunit 3, found in Salmo salar (Atlantic salmon).